The sequence spans 518 residues: Membrane-bound lytic murein transglycosylase F (518 aa).

The first 21 residues, 1–21 (MKKLKINYLFIGILALLLAVA), serve as a signal peptide directing secretion. The interval 22 to 269 (LWPSIPWFGK…RIEEKYLGHG (248 aa)) is non-LT domain. Positions 270–518 (DDFDYVDTRT…SRKGSEEKQN (249 aa)) are LT domain. Glutamate 314 is an active-site residue.

In the N-terminal section; belongs to the bacterial solute-binding protein 3 family. The protein in the C-terminal section; belongs to the transglycosylase Slt family.

Its subcellular location is the cell outer membrane. It carries out the reaction Exolytic cleavage of the (1-&gt;4)-beta-glycosidic linkage between N-acetylmuramic acid (MurNAc) and N-acetylglucosamine (GlcNAc) residues in peptidoglycan, from either the reducing or the non-reducing ends of the peptidoglycan chains, with concomitant formation of a 1,6-anhydrobond in the MurNAc residue.. Its function is as follows. Murein-degrading enzyme that degrades murein glycan strands and insoluble, high-molecular weight murein sacculi, with the concomitant formation of a 1,6-anhydromuramoyl product. Lytic transglycosylases (LTs) play an integral role in the metabolism of the peptidoglycan (PG) sacculus. Their lytic action creates space within the PG sacculus to allow for its expansion as well as for the insertion of various structures such as secretion systems and flagella. The polypeptide is Membrane-bound lytic murein transglycosylase F (Escherichia coli O6:H1 (strain CFT073 / ATCC 700928 / UPEC)).